The sequence spans 370 residues: DNA primase large subunit PriL (370 aa).

The [4Fe-4S] cluster site is built by C230, C301, C310, and C317. Positions 337 to 370 (EGEEAQGKEQGKEKDDGKEKENGKESEVKKKKEK) are disordered.

It belongs to the eukaryotic-type primase large subunit family. As to quaternary structure, heterodimer of a small subunit (PriS) and a large subunit (PriL). Requires [4Fe-4S] cluster as cofactor.

Its function is as follows. Regulatory subunit of DNA primase, an RNA polymerase that catalyzes the synthesis of short RNA molecules used as primers for DNA polymerase during DNA replication. Stabilizes and modulates the activity of the small subunit, increasing the rate of DNA synthesis, and conferring RNA synthesis capability. The DNA polymerase activity may enable DNA primase to also catalyze primer extension after primer synthesis. May also play a role in DNA repair. The protein is DNA primase large subunit PriL of Methanosarcina mazei (strain ATCC BAA-159 / DSM 3647 / Goe1 / Go1 / JCM 11833 / OCM 88) (Methanosarcina frisia).